The chain runs to 429 residues: Small ribosomal subunit protein mS47 (429 aa).

Substrate contacts are provided by glutamate 141, glycine 166, glutamate 189, and aspartate 197.

The protein belongs to the enoyl-CoA hydratase/isomerase family. Mitochondrion-specific ribosomal protein mS47 subfamily. As to quaternary structure, component of the mitochondrial small ribosomal subunit (mt-SSU). Mature yeast 74S mitochondrial ribosomes consist of a small (37S) and a large (54S) subunit. The 37S small subunit contains a 15S ribosomal RNA (15S mt-rRNA) and at least 32 different proteins. The 54S large subunit contains a 21S rRNA (21S mt-rRNA) and at least 45 different proteins. mS47/snr1 forms a protuberance of the yeast mitoribosome and retains a solvent-exposed cavity likely capable of accommodating a substrate, in accordance with it being an active enzyme as well as an integral constituent of the mitoribosome.

It localises to the mitochondrion. It catalyses the reaction 3-hydroxy-2-methylpropanoyl-CoA + H2O = 3-hydroxy-2-methylpropanoate + CoA + H(+). It participates in amino-acid degradation; L-valine degradation. Its function is as follows. Component of the mitochondrial ribosome (mitoribosome), a dedicated translation machinery responsible for the synthesis of mitochondrial genome-encoded proteins, including at least some of the essential transmembrane subunits of the mitochondrial respiratory chain. The mitoribosomes are attached to the mitochondrial inner membrane and translation products are cotranslationally integrated into the membrane. mS47/snr1 has enzymatic activity in vitro, and is able to catalyze the specific hydrolysis of 3-hydroxyisobutyryl-CoA (HIBYL-CoA). However, because the turnover rate of mS47/snr1 is only a fraction of that of the homologous mammalian enzyme, the physiological function of this activity remains unclear. Has an indirect role in endocytic membrane trafficking. In Schizosaccharomyces pombe (strain 972 / ATCC 24843) (Fission yeast), this protein is Small ribosomal subunit protein mS47 (snr1).